A 350-amino-acid chain; its full sequence is Probable dTDP-glucose 4,6-dehydratase (350 aa).

7 to 13 (GGAGFIG) contributes to the NAD(+) binding site. Residue threonine 132 coordinates substrate. Aspartate 133 (proton donor) is an active-site residue. Catalysis depends on proton acceptor residues glutamate 134 and tyrosine 157.

It belongs to the NAD(P)-dependent epimerase/dehydratase family. dTDP-glucose dehydratase subfamily. NAD(+) is required as a cofactor.

The enzyme catalyses dTDP-alpha-D-glucose = dTDP-4-dehydro-6-deoxy-alpha-D-glucose + H2O. It functions in the pathway carbohydrate biosynthesis; dTDP-L-rhamnose biosynthesis. The polypeptide is Probable dTDP-glucose 4,6-dehydratase (Sinorhizobium fredii (strain NBRC 101917 / NGR234)).